We begin with the raw amino-acid sequence, 331 residues long: uncharacterized protein (331 aa).

To bacterial alkanal monooxygenase alpha and beta chains.

This is an uncharacterized protein from Bacillus subtilis (strain 168).